The primary structure comprises 420 residues: Glucose-1-phosphate adenylyltransferase (420 aa).

Residues Y107, G172, 187-188 (EK), and S205 contribute to the alpha-D-glucose 1-phosphate site.

The protein belongs to the bacterial/plant glucose-1-phosphate adenylyltransferase family. In terms of assembly, homotetramer.

The catalysed reaction is alpha-D-glucose 1-phosphate + ATP + H(+) = ADP-alpha-D-glucose + diphosphate. Its pathway is glycan biosynthesis; glycogen biosynthesis. In terms of biological role, involved in the biosynthesis of ADP-glucose, a building block required for the elongation reactions to produce glycogen. Catalyzes the reaction between ATP and alpha-D-glucose 1-phosphate (G1P) to produce pyrophosphate and ADP-Glc. The sequence is that of Glucose-1-phosphate adenylyltransferase from Rhizobium etli (strain ATCC 51251 / DSM 11541 / JCM 21823 / NBRC 15573 / CFN 42).